Here is a 431-residue protein sequence, read N- to C-terminus: GDP-L-galactose phosphorylase 2 (431 aa).

His235 functions as the Tele-GMP-histidine intermediate in the catalytic mechanism. Over residues 398–407 (EEEEEEELEE) the composition is skewed to acidic residues. Positions 398–417 (EEEEEEELEEQNSMNGGSFT) are disordered.

The protein belongs to the GDPGP1 family. As to quaternary structure, interacts with TLP1. Expressed in leaves, stems, roots, flowers and siliques.

The protein resides in the cytoplasm. Its subcellular location is the nucleus. The catalysed reaction is GDP-beta-L-galactose + phosphate = beta-L-galactose 1-phosphate + GDP + H(+). It functions in the pathway cofactor biosynthesis; L-ascorbate biosynthesis via GDP-alpha-D-mannose pathway; L-ascorbate from GDP-alpha-D-mannose: step 2/5. Functionally, catalyzes a reaction of the Smirnoff-Wheeler pathway, the major route to ascorbate biosynthesis in plants. Acts as a phosphorylase rather than as a transferase. Uses preferentially GDP-L-galactose and GDP-D-glucose as substrates. Lower activity with GDP-L-fucose, very low activity with GDP-D-mannose, and no activity with UDP-D-glucose, UDP-D-galactose or ADP-D-glucose. Highly specific for inorganic phosphate as the guanylyl acceptor. In Arabidopsis thaliana (Mouse-ear cress), this protein is GDP-L-galactose phosphorylase 2 (VTC5).